The sequence spans 317 residues: UV DNA damage endonuclease (317 aa).

Belongs to the uve1/UvsE family.

Its function is as follows. Component in a DNA repair pathway. Removal of UV LIGHT damaged nucleotides. Recognizes pyrimidine dimers and cleave a phosphodiester bond immediately 5' to the lesion. In Bacillus cereus (strain G9842), this protein is UV DNA damage endonuclease.